The following is a 448-amino-acid chain: Potassium/proton antiporter CemA (448 aa).

A run of 4 helical transmembrane segments spans residues 224–244, 325–345, 373–393, and 408–428; these read ALAS…ISML, IILH…LFII, ILLL…EIVI, and IISC…KYWI.

This sequence belongs to the CemA family.

The protein resides in the plastid. The protein localises to the chloroplast inner membrane. The enzyme catalyses K(+)(in) + H(+)(out) = K(+)(out) + H(+)(in). In terms of biological role, contributes to K(+)/H(+) antiport activity by supporting proton efflux to control proton extrusion and homeostasis in chloroplasts in a light-dependent manner to modulate photosynthesis. Prevents excessive induction of non-photochemical quenching (NPQ) under continuous-light conditions. Indirectly promotes efficient inorganic carbon uptake into chloroplasts. This is Potassium/proton antiporter CemA from Angiopteris evecta (Mule's foot fern).